The primary structure comprises 513 residues: Na(+)/H(+) antiporter NhaB (513 aa).

Helical transmembrane passes span 21–41, 88–108, 119–139, 143–163, 208–228, 247–267, 303–323, 357–377, 389–409, 447–467, and 477–497; these read ITIV…SPFI, IIAN…IYFM, LLLS…SAAF, FLDA…FYGV, VGTA…LIIA, LPVL…GVFG, ALIG…VGII, LVVF…APII, LALF…VFVA, ATPN…APLI, and MALP…EYIL.

This sequence belongs to the NhaB Na(+)/H(+) (TC 2.A.34) antiporter family.

It is found in the cell inner membrane. The enzyme catalyses 2 Na(+)(in) + 3 H(+)(out) = 2 Na(+)(out) + 3 H(+)(in). Its function is as follows. Na(+)/H(+) antiporter that extrudes sodium in exchange for external protons. This Pasteurella multocida (strain Pm70) protein is Na(+)/H(+) antiporter NhaB.